A 280-amino-acid polypeptide reads, in one-letter code: Undecaprenyl-diphosphatase (280 aa).

The next 8 helical transmembrane spans lie at 3–23 (IILL…EFLP), 45–65 (VDLF…YDYW), 88–108 (QLGL…FTFA), 115–135 (LFNP…IFYV), 150–170 (VSLK…IPGT), 191–211 (AEFS…LDFI), 225–245 (VLGI…RLLV), and 255–275 (IFAW…WGFG).

This sequence belongs to the UppP family.

Its subcellular location is the cell inner membrane. It catalyses the reaction di-trans,octa-cis-undecaprenyl diphosphate + H2O = di-trans,octa-cis-undecaprenyl phosphate + phosphate + H(+). In terms of biological role, catalyzes the dephosphorylation of undecaprenyl diphosphate (UPP). Confers resistance to bacitracin. This chain is Undecaprenyl-diphosphatase, found in Psychrobacter cryohalolentis (strain ATCC BAA-1226 / DSM 17306 / VKM B-2378 / K5).